Here is a 201-residue protein sequence, read N- to C-terminus: MBF complex negative regulatory component yox1 (201 aa).

The span at 1-22 (MSLSDSPSKSGNTGKDLISNNE) shows a compositional bias: polar residues. The disordered stretch occupies residues 1–42 (MSLSDSPSKSGNTGKDLISNNEAKNHEDEETHQKKRRRRTTD). Over residues 23–32 (AKNHEDEETH) the composition is skewed to basic and acidic residues. Residues 33-92 (QKKRRRRTTDAEATLLEQYFLKTPKPSLIERQELSKKLKSSMTPRELQIWFQNKRQSLRR) constitute a DNA-binding region (homeobox).

As to quaternary structure, component of the MBF transcription factor complex. In terms of processing, phosphorylated in response to hydroxyurea. Phosphorylation inhibits the repressor activity and is dependent on rad3. However, the regulation of yox1 by rad3 is probably indirect.

Its subcellular location is the nucleus. Functionally, negative regulatory component of the MBF transcription factor complex involved in cell-cycle G1/S phase-specific gene expression and more particularly DNA replication checkpoint-dependent gene expression. In Schizosaccharomyces pombe (strain 972 / ATCC 24843) (Fission yeast), this protein is MBF complex negative regulatory component yox1 (yox1).